We begin with the raw amino-acid sequence, 209 residues long: Ribosomal RNA large subunit methyltransferase E (209 aa).

S-adenosyl-L-methionine-binding residues include glycine 60, tryptophan 62, aspartate 80, aspartate 96, and aspartate 121. Residue lysine 161 is the Proton acceptor of the active site. The segment covering 182-196 (VQMRKPSSSRDRSRE) has biased composition (basic and acidic residues). Positions 182–209 (VQMRKPSSSRDRSREQYLLGRGFRGRSE) are disordered.

Belongs to the class I-like SAM-binding methyltransferase superfamily. RNA methyltransferase RlmE family.

The protein resides in the cytoplasm. The catalysed reaction is uridine(2552) in 23S rRNA + S-adenosyl-L-methionine = 2'-O-methyluridine(2552) in 23S rRNA + S-adenosyl-L-homocysteine + H(+). Functionally, specifically methylates the uridine in position 2552 of 23S rRNA at the 2'-O position of the ribose in the fully assembled 50S ribosomal subunit. This chain is Ribosomal RNA large subunit methyltransferase E, found in Pseudomonas fluorescens (strain ATCC BAA-477 / NRRL B-23932 / Pf-5).